Reading from the N-terminus, the 427-residue chain is 3-isopropylmalate dehydratase large subunit (427 aa).

Residues C308, C368, and C371 each contribute to the [4Fe-4S] cluster site.

It belongs to the aconitase/IPM isomerase family. LeuC type 2 subfamily. As to quaternary structure, heterodimer of LeuC and LeuD. Requires [4Fe-4S] cluster as cofactor.

The catalysed reaction is (2R,3S)-3-isopropylmalate = (2S)-2-isopropylmalate. Its pathway is amino-acid biosynthesis; L-leucine biosynthesis; L-leucine from 3-methyl-2-oxobutanoate: step 2/4. Its function is as follows. Catalyzes the isomerization between 2-isopropylmalate and 3-isopropylmalate, via the formation of 2-isopropylmaleate. The chain is 3-isopropylmalate dehydratase large subunit from Geobacter metallireducens (strain ATCC 53774 / DSM 7210 / GS-15).